Consider the following 451-residue polypeptide: tRNA modification GTPase MnmE (451 aa).

(6S)-5-formyl-5,6,7,8-tetrahydrofolate contacts are provided by Arg-28, Glu-85, and Lys-124. In terms of domain architecture, TrmE-type G spans 220–377 (GMNVVLVGQP…LRSELLRVAG (158 aa)). Residue Asn-230 coordinates K(+). GTP contacts are provided by residues 230–235 (NVGKSS), 249–255 (TDIAGTT), and 274–277 (DTAG). Ser-234 is a binding site for Mg(2+). K(+) contacts are provided by Thr-249, Ile-251, and Thr-254. Residue Thr-255 participates in Mg(2+) binding. Residue Lys-451 participates in (6S)-5-formyl-5,6,7,8-tetrahydrofolate binding.

The protein belongs to the TRAFAC class TrmE-Era-EngA-EngB-Septin-like GTPase superfamily. TrmE GTPase family. Homodimer. Heterotetramer of two MnmE and two MnmG subunits. K(+) serves as cofactor.

It localises to the cytoplasm. In terms of biological role, exhibits a very high intrinsic GTPase hydrolysis rate. Involved in the addition of a carboxymethylaminomethyl (cmnm) group at the wobble position (U34) of certain tRNAs, forming tRNA-cmnm(5)s(2)U34. This chain is tRNA modification GTPase MnmE, found in Aromatoleum aromaticum (strain DSM 19018 / LMG 30748 / EbN1) (Azoarcus sp. (strain EbN1)).